We begin with the raw amino-acid sequence, 536 residues long: Formate--tetrahydrofolate ligase (536 aa).

51–58 lines the ATP pocket; that stretch reads TAAGEGKT.

Belongs to the formate--tetrahydrofolate ligase family.

It carries out the reaction (6S)-5,6,7,8-tetrahydrofolate + formate + ATP = (6R)-10-formyltetrahydrofolate + ADP + phosphate. It participates in one-carbon metabolism; tetrahydrofolate interconversion. This Thermoplasma volcanium (strain ATCC 51530 / DSM 4299 / JCM 9571 / NBRC 15438 / GSS1) protein is Formate--tetrahydrofolate ligase.